The chain runs to 386 residues: Zinc finger CCCH domain-containing protein 2 (386 aa).

C3H1-type zinc fingers lie at residues 116 to 143 and 151 to 175; these read HYSG…HGVF and RYRT…HTPD. Disordered regions lie at residues 180–200 and 220–252; these read LPAQ…ESYD and SSPT…RRGS. The segment covering 182-192 has biased composition (polar residues); sequence AQQSSPRSVAS. The span at 220-229 shows a compositional bias: low complexity; the sequence is SSPTSTLMSP. Residues 230 to 241 are compositionally biased toward pro residues; that stretch reads PKSPPSESPPLS.

The protein localises to the nucleus. Functionally, involved in leaf senescence delay. May repress jasmonic acid (JA) signaling role in promoting leaf senescence. May regulate panicle development and pollination/fertilization process. This Oryza sativa subsp. japonica (Rice) protein is Zinc finger CCCH domain-containing protein 2.